Reading from the N-terminus, the 39-residue chain is Osmotin-like protein (39 aa).

Belongs to the thaumatin family. Contains intrachain disulfide bonds.

Its function is as follows. May be an important antifungal protein. This is Osmotin-like protein from Hevea brasiliensis (Para rubber tree).